The primary structure comprises 253 residues: uncharacterized protein (253 aa).

S-adenosyl-L-methionine contacts are provided by residues glycine 45, 66–67 (DA), 94–95 (AE), and arginine 110.

Belongs to the methyltransferase superfamily.

This is an uncharacterized protein from Bacillus subtilis (strain 168).